Consider the following 1009-residue polypeptide: Regulator of telomere elongation helicase 1 homolog (1009 aa).

The 316-residue stretch at 7–322 (AGIPVHFPFE…KEMLLELEKA (316 aa)) folds into the Helicase ATP-binding domain. 42 to 49 (SPTGTGKT) provides a ligand contact to ATP. [4Fe-4S] cluster is bound by residues Cys-146, Cys-164, Cys-173, and Cys-209. The DEAH box signature appears at 252-255 (DEAH).

It belongs to the helicase family. RAD3/XPD subfamily.

Its subcellular location is the nucleus. It carries out the reaction ATP + H2O = ADP + phosphate + H(+). In terms of biological role, a probable ATP-dependent DNA helicase implicated in DNA repair and the maintenance of genomic stability. Acts as an anti-recombinase to counteract toxic recombination and limit crossover during meiosis. Regulates meiotic recombination and crossover homeostasis by physically dissociating strand invasion events and thereby promotes noncrossover repair by meiotic synthesis dependent strand annealing (SDSA) as well as disassembly of D loop recombination intermediates. The polypeptide is Regulator of telomere elongation helicase 1 homolog (Drosophila persimilis (Fruit fly)).